The chain runs to 198 residues: Recombination protein RecR (198 aa).

Residues 57–72 (CSICGHITDQDPCYIC) form a C4-type zinc finger. Residues 80-175 (SVICVVQDPK…KLSRIAHGLP (96 aa)) enclose the Toprim domain.

The protein belongs to the RecR family.

Its function is as follows. May play a role in DNA repair. It seems to be involved in an RecBC-independent recombinational process of DNA repair. It may act with RecF and RecO. The protein is Recombination protein RecR of Bacillus velezensis (strain DSM 23117 / BGSC 10A6 / LMG 26770 / FZB42) (Bacillus amyloliquefaciens subsp. plantarum).